Consider the following 207-residue polypeptide: Large ribosomal subunit protein uL4 (207 aa).

This sequence belongs to the universal ribosomal protein uL4 family. As to quaternary structure, part of the 50S ribosomal subunit.

One of the primary rRNA binding proteins, this protein initially binds near the 5'-end of the 23S rRNA. It is important during the early stages of 50S assembly. It makes multiple contacts with different domains of the 23S rRNA in the assembled 50S subunit and ribosome. Functionally, forms part of the polypeptide exit tunnel. This chain is Large ribosomal subunit protein uL4, found in Pelagibacter ubique (strain HTCC1062).